The primary structure comprises 161 residues: Nucleotide-binding protein Rpic_2826 (161 aa).

Belongs to the YajQ family.

Functionally, nucleotide-binding protein. The protein is Nucleotide-binding protein Rpic_2826 of Ralstonia pickettii (strain 12J).